The primary structure comprises 377 residues: Caspase-4 (377 aa).

The required for LPS-binding stretch occupies residues 1–59; it reads MAEGNHRKKPLKVLESLGKDFLTGVLDNLVEQNVLNWKEEEKKKYYDAKTEDKVRVMAD. A propeptide spanning residues 1 to 80 is cleaved from the precursor; that stretch reads MAEGNHRKKP…MLLQTFFNID (80 aa). The region spanning 1–91 is the CARD domain; sequence MAEGNHRKKP…ISPNKKAHPN (91 aa). Position 2 is an N-acetylalanine (alanine 2). The residue at position 83 (serine 83) is a Phosphoserine. The segment at 84-104 is disordered; it reads PNKKAHPNMEAGPPESGESTD. Active-site residues include histidine 210 and cysteine 258. Positions 271-289 are excised as a propeptide; sequence SPASLEVASSQSSENLEED. Arginine 314 is modified ((Microbial infection) ADP-riboxanated arginine).

The protein belongs to the peptidase C14A family. Heterotetramer that consists of two anti-parallel arranged heterodimers, each one formed by a 20 kDa (Caspase-4 subunit p20) and a 10 kDa (Caspase-4 subunit p10) subunit. Upon direct LPS-binding, forms large homooligomers, resulting in its activation. These oligomers are often referred to as 'non-canonical inflammasomes'. In its precursor form, interacts with TMEM214; this interaction is required for association with the endoplasmic reticulum membrane. Interacts with CASP1. Interacts with NOD2. Interacts with SERPINB1; this interaction regulates CASP4 activity. In terms of assembly, heterotetramer that consists of two anti-parallel arranged heterodimers, each one formed by a 20 kDa (Caspase-4 subunit p20) and a 10 kDa (Caspase-4 subunit p10) subunit. As to quaternary structure, (Microbial infection) Interacts with NleF protein from pathogenic E.coli; this interaction leads to enzyme inhibition. (Microbial infection) Interacts with cathepsin CTSG; the interaction is promoted by the Td92 surface protein of the periodontal pathogen T.denticola and leads to CASP4 activation. Post-translationally, in response to activation signals, undergoes autoproteolytic cleavage and activation. In terms of processing, (Microbial infection) ADP-riboxanation by S.flexneri OspC3 blocks CASP4 autoprocessing, preventing CASP4 activation and ability to recognize and cleave GSDMD, thereby thwarting the inflammasome/pyroptosis-mediated defense. Widely expressed, including in keratinocytes and colonic and small intestinal epithelial cells (at protein level). Not detected in brain.

Its subcellular location is the cytoplasm. The protein resides in the cytosol. It is found in the endoplasmic reticulum membrane. It localises to the mitochondrion. The protein localises to the inflammasome. Its subcellular location is the secreted. It catalyses the reaction Strict requirement for Asp at the P1 position. It has a preferred cleavage sequence of Tyr-Val-Ala-Asp-|- but also cleaves at Asp-Glu-Val-Asp-|-.. Its activity is regulated as follows. Activated by homooligomerization induced by direct binding to cytosolic LPS, in a TLR4-independent manner. In addition to LPS, CASP4/CASP11 may also be activated by oxidized phospholipid 1-palmitoyl-2-arachidonoyl- sn-glycero-3-phosphorylcholine, an oxidized phospholipid (oxPAPC), in dendritic cells, promoting adaptive immunity. The role of oxPAPC is however unclear and another report suggests that oxPAPC competes with LPS-binding and inhibits the non-canonical inflammasome in macrophages. In terms of biological role, inflammatory caspase that acts as the effector of the non-canonical inflammasome by mediating lipopolysaccharide (LPS)-induced pyroptosis. Also indirectly activates the NLRP3 and NLRP6 inflammasomes. Acts as a thiol protease that cleaves a tetrapeptide after an Asp residue at position P1: catalyzes cleavage of CGAS, GSDMD and IL18. Effector of the non-canonical inflammasome independently of NLRP3 inflammasome and CASP1: the non-canonical inflammasome promotes pyroptosis through GSDMD cleavage without involving secretion of cytokine IL1B. In the non-canonical inflammasome, CASP4 is activated by direct binding to the lipid A moiety of LPS without the need of an upstream sensor. LPS-binding promotes CASP4 activation and CASP4-mediated cleavage of GSDMD and IL18, followed by IL18 secretion through the GSDMD pore, pyroptosis of infected cells and their extrusion into the gut lumen. Also indirectly promotes secretion of mature cytokines (IL1A and HMGB1) downstream of GSDMD-mediated pyroptosis via activation of the NLRP3 and NLRP6 inflammasomes. Involved in NLRP3-dependent CASP1 activation and IL1B secretion in response to non-canonical activators, such as UVB radiation or cholera enterotoxin. Involved in NLRP6 inflammasome-dependent activation in response to lipoteichoic acid (LTA), a cell-wall component of Gram-positive bacteria, which leads to CASP1 activation and IL1B secretion. Involved in LPS-induced IL6 secretion; this activity may not require caspase enzymatic activity. The non-canonical inflammasome is required for innate immunity to cytosolic, but not vacuolar, bacteria. Plays a crucial role in the restriction of S.typhimurium replication in colonic epithelial cells during infection. Activation of the non-canonical inflammasome in brain endothelial cells can lead to excessive pyroptosis, leading to blood-brain barrier breakdown. Pyroptosis limits bacterial replication, while cytokine secretion promotes the recruitment and activation of immune cells and triggers mucosal inflammation. May also act as an activator of adaptive immunity in dendritic cells, following activation by oxidized phospholipid 1-palmitoyl-2-arachidonoyl- sn-glycero-3-phosphorylcholine, an oxidized phospholipid (oxPAPC). Involved in cell death induced by endoplasmic reticulum stress and by treatment with cytotoxic APP peptides found in Alzheimer's patient brains. Cleavage of GSDMD is not strictly dependent on the consensus cleavage site but depends on an exosite interface on CASP4 that recognizes and binds the Gasdermin-D, C-terminal (GSDMD-CT) part. Catalyzes cleavage and maturation of IL18; IL18 processing also depends of the exosite interface on CASP4. In contrast, it does not directly process IL1B. During non-canonical inflammasome activation, cuts CGAS and may play a role in the regulation of antiviral innate immune activation. Its function is as follows. (Microbial infection) In response to the Td92 surface protein of the periodontal pathogen T.denticola, activated by cathepsin CTSG which leads to production and secretion of IL1A and pyroptosis of gingival fibroblasts. This is Caspase-4 from Homo sapiens (Human).